We begin with the raw amino-acid sequence, 331 residues long: 6-phosphogluconolactonase (331 aa).

The protein belongs to the cycloisomerase 2 family.

It catalyses the reaction 6-phospho-D-glucono-1,5-lactone + H2O = 6-phospho-D-gluconate + H(+). It participates in carbohydrate degradation; pentose phosphate pathway; D-ribulose 5-phosphate from D-glucose 6-phosphate (oxidative stage): step 2/3. Its function is as follows. Catalyzes the hydrolysis of 6-phosphogluconolactone to 6-phosphogluconate. The chain is 6-phosphogluconolactonase from Salmonella agona (strain SL483).